A 331-amino-acid polypeptide reads, in one-letter code: Barley B recombinant-like protein D (331 aa).

A coiled-coil region spans residues Ala43–Arg101. Positions Ala51–Ala86 are alanine-zipper. Polar residues predominate over residues Gly104–Lys122. 2 disordered regions span residues Gly104–Leu140 and Ala156–Ser205.

Belongs to the BBR/BPC family. As to quaternary structure, homodimer. Heterodimer.

It is found in the nucleus. Its function is as follows. Transcriptional regulator that specifically binds to GA-rich elements (GAGA-repeats) present in regulatory sequences of genes involved in developmental processes. This is Barley B recombinant-like protein D from Oryza sativa subsp. japonica (Rice).